An 895-amino-acid polypeptide reads, in one-letter code: Serine-rich coiled-coil domain-containing protein 1 (895 aa).

4 disordered regions span residues 1–142, 154–177, 332–394, and 459–497; these read MGDS…KEPS, SGRS…KQST, ELHS…RTLG, and RSSS…SSKM. Positions 43–56 are enriched in low complexity; the sequence is SSSPSSTNSSSGST. The span at 83-102 shows a compositional bias: polar residues; that stretch reads TEQNLSISNGAQPSHSNMQK. Residues 131–142 show a composition bias toward basic and acidic residues; the sequence is LTEDFEREKEPS. Positions 348-358 are enriched in polar residues; sequence SLQSTELSVGN. Residues 675–705 adopt a coiled-coil conformation; it reads MLRLQLKDRDELISQLQAELEKVQHLQKAFA. The interval 731-753 is disordered; the sequence is QGGRETTHRNRTMSQSHSTRDRK.

The protein belongs to the CCSER family.

This chain is Serine-rich coiled-coil domain-containing protein 1 (Ccser1), found in Mus musculus (Mouse).